The sequence spans 704 residues: Elongation factor G (704 aa).

One can recognise a tr-type G domain in the interval 8-291 (DKVRNIGIMA…AVVEYLASPV (284 aa)). GTP is bound by residues 17–24 (AHIDAGKT), 90–94 (DTPGH), and 144–147 (NKMD).

It belongs to the TRAFAC class translation factor GTPase superfamily. Classic translation factor GTPase family. EF-G/EF-2 subfamily.

Its subcellular location is the cytoplasm. Catalyzes the GTP-dependent ribosomal translocation step during translation elongation. During this step, the ribosome changes from the pre-translocational (PRE) to the post-translocational (POST) state as the newly formed A-site-bound peptidyl-tRNA and P-site-bound deacylated tRNA move to the P and E sites, respectively. Catalyzes the coordinated movement of the two tRNA molecules, the mRNA and conformational changes in the ribosome. This is Elongation factor G from Chlorobium limicola (strain DSM 245 / NBRC 103803 / 6330).